The chain runs to 479 residues: Variant surface glycoprotein ILTAT 1.22 (479 aa).

An N-terminal signal peptide occupies residues 1–12 (MDTAQVFALFYM). N-linked (GlcNAc...) asparagine glycans are attached at residues N120 and N458. N462 carries the GPI-anchor amidated asparagine lipid modification. The propeptide at 463 to 479 (NSFAIKTSTLLLAVLLF) is removed in mature form.

Its subcellular location is the cell membrane. VSG forms a coat on the surface of the parasite. The trypanosome evades the immune response of the host by expressing a series of antigenically distinct VSGs from an estimated 1000 VSG genes. This chain is Variant surface glycoprotein ILTAT 1.22, found in Trypanosoma brucei brucei.